A 73-amino-acid polypeptide reads, in one-letter code: Translation initiation factor IF-1 (73 aa).

The S1-like domain maps to 1–73; sequence MAKKDGAIEI…TRGRIVYRYK (73 aa).

It belongs to the IF-1 family. As to quaternary structure, component of the 30S ribosomal translation pre-initiation complex which assembles on the 30S ribosome in the order IF-2 and IF-3, IF-1 and N-formylmethionyl-tRNA(fMet); mRNA recruitment can occur at any time during PIC assembly.

It is found in the cytoplasm. Its function is as follows. One of the essential components for the initiation of protein synthesis. Stabilizes the binding of IF-2 and IF-3 on the 30S subunit to which N-formylmethionyl-tRNA(fMet) subsequently binds. Helps modulate mRNA selection, yielding the 30S pre-initiation complex (PIC). Upon addition of the 50S ribosomal subunit IF-1, IF-2 and IF-3 are released leaving the mature 70S translation initiation complex. The sequence is that of Translation initiation factor IF-1 from Thermobifida fusca (strain YX).